The primary structure comprises 390 residues: D-alanyl-D-alanine carboxypeptidase DacD (390 aa).

An N-terminal signal peptide occupies residues 1–23; it reads MLLKRRLFIAASLFAMHLSPALA. Catalysis depends on Ser-65, which acts as the Acyl-ester intermediate. Catalysis depends on Lys-68, which acts as the Proton acceptor. Residue Ser-131 is part of the active site. Position 234 (Lys-234) interacts with substrate.

This sequence belongs to the peptidase S11 family.

Its subcellular location is the cell inner membrane. The enzyme catalyses Preferential cleavage: (Ac)2-L-Lys-D-Ala-|-D-Ala. Also transpeptidation of peptidyl-alanyl moieties that are N-acyl substituents of D-alanine.. It functions in the pathway cell wall biogenesis; peptidoglycan biosynthesis. Its function is as follows. Removes C-terminal D-alanyl residues from sugar-peptide cell wall precursors. The polypeptide is D-alanyl-D-alanine carboxypeptidase DacD (dacD) (Salmonella typhimurium (strain LT2 / SGSC1412 / ATCC 700720)).